A 267-amino-acid polypeptide reads, in one-letter code: Myxobacterial hemagglutinin (267 aa).

4 tandem repeats follow at residues 1-66 (MAAY…GTLS), 67-133 (SANN…SEVT), 134-200 (DGDT…GTLT), and 201-267 (SPDT…ARLG). A 4 X 65 AA tandem repeats region spans residues 1-267 (MAAYLVQNQW…GPIGFRARLG (267 aa)).

The protein belongs to the bacterial lectin family.

This lectin might have a role in the differentiation of cells. This chain is Myxobacterial hemagglutinin (mbhA), found in Myxococcus xanthus.